A 184-amino-acid polypeptide reads, in one-letter code: Endoribonuclease YbeY (184 aa).

2 stretches are compositionally biased toward acidic residues: residues M1–P11 and D19–D29. The tract at residues M1–L37 is disordered. Residues H146, H150, and H156 each contribute to the Zn(2+) site.

The protein belongs to the endoribonuclease YbeY family. Requires Zn(2+) as cofactor.

It is found in the cytoplasm. Its function is as follows. Single strand-specific metallo-endoribonuclease involved in late-stage 70S ribosome quality control and in maturation of the 3' terminus of the 16S rRNA. This is Endoribonuclease YbeY from Burkholderia mallei (strain ATCC 23344).